The chain runs to 258 residues: Small ribosomal subunit protein mS23 (258 aa).

The span at 230 to 239 (KKNSTKQSWA) shows a compositional bias: polar residues. The disordered stretch occupies residues 230-258 (KKNSTKQSWAEATEEKEEQDSAEPEELKL). Acidic residues predominate over residues 241 to 258 (ATEEKEEQDSAEPEELKL).

It belongs to the mitochondrion-specific ribosomal protein mS23 family. Component of the mitochondrial small ribosomal subunit.

Its subcellular location is the mitochondrion. This is Small ribosomal subunit protein mS23 (RSM25) from Eremothecium gossypii (strain ATCC 10895 / CBS 109.51 / FGSC 9923 / NRRL Y-1056) (Yeast).